The chain runs to 701 residues: Glycine--tRNA ligase beta subunit (701 aa).

The protein belongs to the class-II aminoacyl-tRNA synthetase family. In terms of assembly, tetramer of two alpha and two beta subunits.

The protein resides in the cytoplasm. The catalysed reaction is tRNA(Gly) + glycine + ATP = glycyl-tRNA(Gly) + AMP + diphosphate. The chain is Glycine--tRNA ligase beta subunit from Thiobacillus denitrificans (strain ATCC 25259 / T1).